A 224-amino-acid chain; its full sequence is MDEILARAGIFQGVEPSAIAALTKQLQPVDFPRGHTVFAEGEPGDRLYIIISGKVKIGRRAPDGRENLLTIMGPSDMFGELSIFDPGPRTSSATTITEVRAVSMDRDALRSWIADRPEISEQLLRVLARRLRRTNNNLADLIFTDVPGRVAKQLLQLAQRFGTQEGGALRVTHDLTQEEIAQLVGASRETVNKALADFAHRGWIRLEGKSVLISDSERLARRAR.

Residues G64–T70, G79–S82, R89–T90, T134–N135, I142–F143, and E178–R188 each bind 3',5'-cyclic AMP. Residues T144–E217 form the HTH crp-type domain. The segment at residues Q177–A196 is a DNA-binding region (H-T-H motif).

In terms of assembly, homodimer.

Global transcriptional regulator that complexes with cAMP and binds to specific DNA promoter sites, causing DNA-bending, to regulate transcription. cAMP improves binding to specific DNA sequences, probably by altering protein conformation. Activates expression of whiB1. The protein is CRP-like cAMP-activated global transcriptional regulator of Mycobacterium tuberculosis (strain CDC 1551 / Oshkosh).